A 413-amino-acid polypeptide reads, in one-letter code: CinA-like protein (413 aa).

This sequence belongs to the CinA family.

This chain is CinA-like protein, found in Geobacter metallireducens (strain ATCC 53774 / DSM 7210 / GS-15).